The primary structure comprises 314 residues: Methionyl-tRNA formyltransferase (314 aa).

Residue 112–115 (SLLP) participates in (6S)-5,6,7,8-tetrahydrofolate binding.

This sequence belongs to the Fmt family.

It catalyses the reaction L-methionyl-tRNA(fMet) + (6R)-10-formyltetrahydrofolate = N-formyl-L-methionyl-tRNA(fMet) + (6S)-5,6,7,8-tetrahydrofolate + H(+). Attaches a formyl group to the free amino group of methionyl-tRNA(fMet). The formyl group appears to play a dual role in the initiator identity of N-formylmethionyl-tRNA by promoting its recognition by IF2 and preventing the misappropriation of this tRNA by the elongation apparatus. In Legionella pneumophila subsp. pneumophila (strain Philadelphia 1 / ATCC 33152 / DSM 7513), this protein is Methionyl-tRNA formyltransferase.